Consider the following 379-residue polypeptide: uncharacterized protein (379 aa).

Disordered regions lie at residues 1–25 (MASDWRRQSTSRGIPNEGQNDEKGK), 128–158 (QGKTTSATTSNSTIRGKPSFGRENSAKIERT), and 355–379 (TEKTSILSPRRRQKRMRSLSSQGDI). Over residues 128–141 (QGKTTSATTSNSTI) the composition is skewed to polar residues.

This is an uncharacterized protein from Caenorhabditis elegans.